We begin with the raw amino-acid sequence, 308 residues long: Apolipoprotein E (308 aa).

Positions 1 to 18 (MKFLWAALVVTLLAGCRA) are cleaved as a signal peptide. 8 tandem repeats follow at residues 75–96 (LLIE…KQVG), 97–118 (PIAQ…ARLE), 119–140 (SDME…AALG), 141–162 (QNTD…KRLL), 163–184 (RDAE…EAAE), 185–206 (RGVS…LQAI), 207–224 (PPSQ…QKVR), and 225–246 (GRLE…DQME). The segment at 75–246 (LLIEETMKEV…RLDDMRDQME (172 aa)) is 8 X 22 AA approximate tandem repeats. The segment at 153–163 (HLRKLRKRLLR) is LDL and other lipoprotein receptors binding. 157-160 (LRKR) is a heparin binding site. The segment at 205 to 281 (AIPPSQQLRE…SWFEPLVQDM (77 aa)) is lipid-binding and lipoprotein association. 220 to 227 (GQKVRGRL) is a binding site for heparin. Residues 257-308 (SQVRLQAEAFQTRLKSWFEPLVQDMQRQWASLVEKVQSTLGISPSTKPSKTK) are homooligomerization. Residues 269–281 (RLKSWFEPLVQDM) are specificity for association with VLDL.

The protein belongs to the apolipoprotein A1/A4/E family. As to quaternary structure, homotetramer. May interact with ABCA1; functionally associated with ABCA1 in the biogenesis of HDLs. May interact with APP/A4 amyloid-beta peptide; the interaction is extremely stable in vitro but its physiological significance is unclear. May interact with MAPT. May interact with MAP2. In the cerebrospinal fluid, interacts with secreted SORL1. Interacts with PMEL; this allows the loading of PMEL luminal fragment on ILVs to induce fibril nucleation. In terms of processing, APOE exists as multiple glycosylated and sialylated glycoforms within cells and in plasma. The extent of glycosylation and sialylation are tissue and context specific. Glycated in plasma VLDL. Post-translationally, phosphorylated by FAM20C in the extracellular medium.

Its subcellular location is the secreted. The protein resides in the extracellular space. It localises to the extracellular matrix. The protein localises to the extracellular vesicle. It is found in the endosome. Its subcellular location is the multivesicular body. APOE is an apolipoprotein, a protein associating with lipid particles, that mainly functions in lipoprotein-mediated lipid transport between organs via the plasma and interstitial fluids. APOE is a core component of plasma lipoproteins and is involved in their production, conversion and clearance. Apolipoproteins are amphipathic molecules that interact both with lipids of the lipoprotein particle core and the aqueous environment of the plasma. As such, APOE associates with chylomicrons, chylomicron remnants, very low density lipoproteins (VLDL) and intermediate density lipoproteins (IDL) but shows a preferential binding to high-density lipoproteins (HDL). It also binds a wide range of cellular receptors including the LDL receptor/LDLR and the very low-density lipoprotein receptor/VLDLR that mediate the cellular uptake of the APOE-containing lipoprotein particles. Finally, APOE also has a heparin-binding activity and binds heparan-sulfate proteoglycans on the surface of cells, a property that supports the capture and the receptor-mediated uptake of APOE-containing lipoproteins by cells. This Pteropus vampyrus (Large flying fox) protein is Apolipoprotein E (APOE).